Here is a 528-residue protein sequence, read N- to C-terminus: MNSTSTSDVIGRRVEVNGEHATVRFSGLVPPVAGLWLGVEWDNPERGKHDGSHEGTVYFKCRHPTAGSFIRPHKVNFGVDFLTAIKNRYVLEDEPKEEETEQIVIIGNKPVETIGFDSVIKQQSQLSKLQDVSLRNCAVNGAGDKGEIAKACPNIRSIDLSKNLLSSWEEVIDIADQLKHLEVLNLSENKLTSPSSSPSPTGTFPTLKVLVLNRTGVTWAEVLRCASGWPVLEKLYLESNNIIISERPTDVLQTVKLLDLSSNQLIDENQLFLIAYLPRLEQLILSDIGISSIHFPDAGIGCKTSMFPSLQYLVLNDNQIAQWSFMNELDKLQSLHALSCTRNPLTEGSKDAQTTRQFIIARIGQLRTLNKCAIEPEERRGAELDYRKAFGNEWKKAGGHQDPEKNRPNEEFLAAHPRYQALCLKYGAPEDGELKTQQPFLLKNQLLTLKIKYPNQHDQKVIEKQLPDSMTVQKVKGLLSRLLKVPVSELLLSYESPKMPGKEVELENDLQPLRFYSVENGDCLLVRW.

Residues 27 to 71 (GLVPPVAGLWLGVEWDNPERGKHDGSHEGTVYFKCRHPTAGSFIR) form the CAP-Gly domain. 7 LRR repeats span residues 152-176 (CPNIRSIDLSKNLLSSWEEVIDIAD), 178-206 (LKHLEVLNLSENKLTSPSSSPSPTGTFPT), 207-229 (LKVLVLNRTGVTWAEVLRCASGW), 231-253 (VLEKLYLESNNIIISERPTDVLQ), 254-274 (TVKLLDLSSNQLIDENQLFLI), 279-300 (RLEQLILSDIGISSIHFPDAGI), and 309-330 (SLQYLVLNDNQIAQWSFMNELD). The 43-residue stretch at 343-385 (NPLTEGSKDAQTTRQFIIARIGQLRTLNKCAIEPEERRGAELD) folds into the LRRCT domain. K464 carries the N6-acetyllysine modification. S496 bears the Phosphoserine mark.

Belongs to the TBCE family. In terms of assembly, supercomplex made of cofactors A to E. Cofactors A and D function by capturing and stabilizing tubulin in a quasi-native conformation. Cofactor E binds to the cofactor D-tubulin complex; interaction with cofactor C then causes the release of tubulin polypeptides that are committed to the native state. Cofactors B and E can form a heterodimer which binds to alpha-tubulin and enhances their ability to dissociate tubulin heterodimers. Interacts with TBCD.

It localises to the cytoplasm. The protein localises to the cytoskeleton. Functionally, tubulin-folding protein; involved in the second step of the tubulin folding pathway and in the regulation of tubulin heterodimer dissociation. Required for correct organization of microtubule cytoskeleton and mitotic splindle, and maintenance of the neuronal microtubule network. The sequence is that of Tubulin-specific chaperone E (TBCE) from Bos taurus (Bovine).